The sequence spans 516 residues: Beta-glucosidase 1 (516 aa).

Residues 1–21 (MGHRLVVVLLLALLVAGAARA) form the signal peptide. An a beta-D-glucoside-binding site is contributed by Q68. The N-linked (GlcNAc...) asparagine glycan is linked to N96. A beta-D-glucoside contacts are provided by residues H169 and 214 to 215 (NE). E215 acts as the Proton donor in catalysis. A disulfide bridge connects residues C234 and C237. The N-linked (GlcNAc...) asparagine glycan is linked to N290. Residue Y353 participates in a beta-D-glucoside binding. N364 is a glycosylation site (N-linked (GlcNAc...) asparagine). E424 provides a ligand contact to a beta-D-glucoside. E424 (nucleophile) is an active-site residue. N432 is a glycosylation site (N-linked (GlcNAc...) asparagine). Residues W471, 478-479 (EW), and F487 contribute to the a beta-D-glucoside site.

It belongs to the glycosyl hydrolase 1 family.

It carries out the reaction Hydrolysis of terminal, non-reducing beta-D-glucosyl residues with release of beta-D-glucose.. This Oryza sativa subsp. japonica (Rice) protein is Beta-glucosidase 1 (BGLU1).